A 313-amino-acid chain; its full sequence is Porphobilinogen deaminase (313 aa).

At cysteine 242 the chain carries S-(dipyrrolylmethanemethyl)cysteine.

The protein belongs to the HMBS family. In terms of assembly, monomer. Dipyrromethane is required as a cofactor.

It carries out the reaction 4 porphobilinogen + H2O = hydroxymethylbilane + 4 NH4(+). Its pathway is porphyrin-containing compound metabolism; protoporphyrin-IX biosynthesis; coproporphyrinogen-III from 5-aminolevulinate: step 2/4. In terms of biological role, tetrapolymerization of the monopyrrole PBG into the hydroxymethylbilane pre-uroporphyrinogen in several discrete steps. The polypeptide is Porphobilinogen deaminase (Shigella flexneri).